Consider the following 323-residue polypeptide: Methionyl-tRNA formyltransferase (323 aa).

(6S)-5,6,7,8-tetrahydrofolate is bound at residue 121–124 (SLLP).

The protein belongs to the Fmt family.

The catalysed reaction is L-methionyl-tRNA(fMet) + (6R)-10-formyltetrahydrofolate = N-formyl-L-methionyl-tRNA(fMet) + (6S)-5,6,7,8-tetrahydrofolate + H(+). Attaches a formyl group to the free amino group of methionyl-tRNA(fMet). The formyl group appears to play a dual role in the initiator identity of N-formylmethionyl-tRNA by promoting its recognition by IF2 and preventing the misappropriation of this tRNA by the elongation apparatus. This is Methionyl-tRNA formyltransferase from Desulfotalea psychrophila (strain LSv54 / DSM 12343).